The primary structure comprises 183 residues: ATP-dependent protease subunit HslV (183 aa).

Residue threonine 12 is part of the active site. Na(+)-binding residues include alanine 166, cysteine 169, and threonine 172.

Belongs to the peptidase T1B family. HslV subfamily. A double ring-shaped homohexamer of HslV is capped on each side by a ring-shaped HslU homohexamer. The assembly of the HslU/HslV complex is dependent on binding of ATP.

The protein resides in the cytoplasm. The enzyme catalyses ATP-dependent cleavage of peptide bonds with broad specificity.. Allosterically activated by HslU binding. Protease subunit of a proteasome-like degradation complex believed to be a general protein degrading machinery. In Afipia carboxidovorans (strain ATCC 49405 / DSM 1227 / KCTC 32145 / OM5) (Oligotropha carboxidovorans), this protein is ATP-dependent protease subunit HslV.